The chain runs to 337 residues: MSLTLSNVILHQLTKNDQDEIEINLRNQVLDADSSTEGLVAELHRVYSSKGAKGFALFAEDSEFCHWLKQYRTGEMDFVTFSNQSAQRLQVELAKYPFAEAGTLVMAEYQSLATDYLFIGLLPTCHSMKVTEQLDISATDYLDVAKMDIVARIDLSSWETNSDSNRYLTFIKGRVGRKISDFFLDFLQAVVGLDAKEQNQVLMQAVEDFCADSRLDKEEKQQYRKQVYDYCNGQLQAGDEVAVKELAGELPPAEDGTNFYEFTSKQGYELEESFPADRTAMRKLTKFVGAGGGMSINFDSMLLGERIFYDAETDTLTIKGTPPNLKDQLLRRLNTDN.

It belongs to the YejK family.

Its subcellular location is the cytoplasm. The protein localises to the nucleoid. The protein is Nucleoid-associated protein PBPRA2585 of Photobacterium profundum (strain SS9).